The primary structure comprises 383 residues: S-adenosylmethionine synthase (383 aa).

Histidine 15 is an ATP binding site. Aspartate 17 serves as a coordination point for Mg(2+). Glutamate 43 is a binding site for K(+). L-methionine is bound by residues glutamate 56 and glutamine 99. The segment at 99-109 (QSPDINQGVDR) is flexible loop. ATP-binding positions include 164–166 (DAK), 230–231 (RF), aspartate 239, 245–246 (RK), alanine 262, and lysine 266. Aspartate 239 is a binding site for L-methionine. Lysine 270 provides a ligand contact to L-methionine.

This sequence belongs to the AdoMet synthase family. Homotetramer; dimer of dimers. Requires Mg(2+) as cofactor. It depends on K(+) as a cofactor.

The protein resides in the cytoplasm. It catalyses the reaction L-methionine + ATP + H2O = S-adenosyl-L-methionine + phosphate + diphosphate. Its pathway is amino-acid biosynthesis; S-adenosyl-L-methionine biosynthesis; S-adenosyl-L-methionine from L-methionine: step 1/1. In terms of biological role, catalyzes the formation of S-adenosylmethionine (AdoMet) from methionine and ATP. The overall synthetic reaction is composed of two sequential steps, AdoMet formation and the subsequent tripolyphosphate hydrolysis which occurs prior to release of AdoMet from the enzyme. The protein is S-adenosylmethionine synthase of Shewanella loihica (strain ATCC BAA-1088 / PV-4).